The chain runs to 139 residues: Nucleoside diphosphate kinase (139 aa).

Lysine 10, phenylalanine 58, arginine 86, threonine 92, arginine 103, and asparagine 113 together coordinate ATP. Histidine 116 acts as the Pros-phosphohistidine intermediate in catalysis.

The protein belongs to the NDK family. In terms of assembly, homotetramer. The cofactor is Mg(2+).

It is found in the cytoplasm. The catalysed reaction is a 2'-deoxyribonucleoside 5'-diphosphate + ATP = a 2'-deoxyribonucleoside 5'-triphosphate + ADP. The enzyme catalyses a ribonucleoside 5'-diphosphate + ATP = a ribonucleoside 5'-triphosphate + ADP. Functionally, major role in the synthesis of nucleoside triphosphates other than ATP. The ATP gamma phosphate is transferred to the NDP beta phosphate via a ping-pong mechanism, using a phosphorylated active-site intermediate. The sequence is that of Nucleoside diphosphate kinase from Phenylobacterium zucineum (strain HLK1).